Reading from the N-terminus, the 485-residue chain is tRNA-2-methylthio-N(6)-dimethylallyladenosine synthase (485 aa).

The region spanning 37–154 (GKLYIKTHGC…LPELIRARRE (118 aa)) is the MTTase N-terminal domain. [4Fe-4S] cluster contacts are provided by Cys46, Cys83, Cys117, Cys191, Cys195, and Cys198. Residues 177-416 (RADGPSAFVS…HINAHAAGIS (240 aa)) enclose the Radical SAM core domain. The TRAM domain occupies 417–480 (QRMVGSVQRV…SNSLRGRIQL (64 aa)).

The protein belongs to the methylthiotransferase family. MiaB subfamily. As to quaternary structure, monomer. [4Fe-4S] cluster is required as a cofactor.

The protein localises to the cytoplasm. The enzyme catalyses N(6)-dimethylallyladenosine(37) in tRNA + (sulfur carrier)-SH + AH2 + 2 S-adenosyl-L-methionine = 2-methylsulfanyl-N(6)-dimethylallyladenosine(37) in tRNA + (sulfur carrier)-H + 5'-deoxyadenosine + L-methionine + A + S-adenosyl-L-homocysteine + 2 H(+). Its function is as follows. Catalyzes the methylthiolation of N6-(dimethylallyl)adenosine (i(6)A), leading to the formation of 2-methylthio-N6-(dimethylallyl)adenosine (ms(2)i(6)A) at position 37 in tRNAs that read codons beginning with uridine. In Xanthomonas campestris pv. campestris (strain 8004), this protein is tRNA-2-methylthio-N(6)-dimethylallyladenosine synthase.